The following is a 62-amino-acid chain: Trypsin inhibitor MCI-3 (62 aa).

Belongs to the protease inhibitor I13 (potato type I serine protease inhibitor) family.

In Momordica charantia (Bitter gourd), this protein is Trypsin inhibitor MCI-3.